Consider the following 562-residue polypeptide: Putative transport protein NT01EI_2530 (562 aa).

Transmembrane regions (helical) follow at residues 8–28 (LLTGNYILLLFVVLALGLCLG), 32–52 (LGSIQLGNSIGVLVVSLLLGQ), 66–86 (FMLFIFCVGVEAGPNFFSIFF), 94–114 (MLALVMVASALCIALGLGKLF), 118–138 (IGLTAGMLAGSMTSTPVLVGA), and 158–178 (HLSLGYALTYLVGLVSLIFGA). RCK C-terminal domains are found at residues 202–288 (LDND…SFRN) and 290–373 (KEVF…RIGF). 5 helical membrane-spanning segments follow: residues 383–403 (LLAFCAFFIIGLMIGLITFQF), 406–426 (FSFGIGNAAGLLFAGIMLGFL), 443–463 (MVKEFGLMVFMAGVGLSAGAG), 477–497 (IAGLIVSLVPVVICFLFGAFV), and 541–561 (IANVLLTLAGTLIIIVWPGVV).

The protein belongs to the AAE transporter (TC 2.A.81) family. YbjL subfamily.

It is found in the cell membrane. The protein is Putative transport protein NT01EI_2530 of Edwardsiella ictaluri (strain 93-146).